Here is a 90-residue protein sequence, read N- to C-terminus: Phosphoribosyl-ATP pyrophosphatase (90 aa).

Belongs to the PRA-PH family.

The protein resides in the cytoplasm. It carries out the reaction 1-(5-phospho-beta-D-ribosyl)-ATP + H2O = 1-(5-phospho-beta-D-ribosyl)-5'-AMP + diphosphate + H(+). It participates in amino-acid biosynthesis; L-histidine biosynthesis; L-histidine from 5-phospho-alpha-D-ribose 1-diphosphate: step 2/9. The sequence is that of Phosphoribosyl-ATP pyrophosphatase from Streptomyces avermitilis (strain ATCC 31267 / DSM 46492 / JCM 5070 / NBRC 14893 / NCIMB 12804 / NRRL 8165 / MA-4680).